Here is a 308-residue protein sequence, read N- to C-terminus: tRNA pseudouridine synthase B (308 aa).

D47 serves as the catalytic Nucleophile.

The protein belongs to the pseudouridine synthase TruB family. Type 1 subfamily.

The catalysed reaction is uridine(55) in tRNA = pseudouridine(55) in tRNA. Responsible for synthesis of pseudouridine from uracil-55 in the psi GC loop of transfer RNAs. This Xanthomonas euvesicatoria pv. vesicatoria (strain 85-10) (Xanthomonas campestris pv. vesicatoria) protein is tRNA pseudouridine synthase B.